A 990-amino-acid polypeptide reads, in one-letter code: A-type ATP synthase subunit B (990 aa).

Residues 491–614 (VAGLIASDGS…LQLLLKRLGV (124 aa)) enclose the DOD-type homing endonuclease domain.

Belongs to the ATPase alpha/beta chains family. In terms of assembly, has multiple subunits with at least A(3), B(3), C, D, E, F, H, I and proteolipid K(x). Post-translationally, this protein undergoes a protein self splicing that involves a post-translational excision of the VDE intervening region (intein) followed by peptide ligation.

It localises to the cell membrane. Functionally, component of the A-type ATP synthase that produces ATP from ADP in the presence of a proton gradient across the membrane. The B chain is a regulatory subunit. This Methanopyrus kandleri (strain AV19 / DSM 6324 / JCM 9639 / NBRC 100938) protein is A-type ATP synthase subunit B.